A 391-amino-acid chain; its full sequence is MDYYDVLGVSKTASPEEIKKAYRKLAVKYHPDKNPGDAEAEKRFKEVSEAYEVLSDAQKRESYDRYGKDGPFAGAGGFGGAGMGNMEDALRTFMGAFGGEFGGGGSFFEGLFGGLGEAFGMRGDPAGARQGASKKVHITLTFEEAARGVEKELLVSGYKTCTTCSGSGAANERGIKCCERCKGSGQIVQSRGFFSMASTCPECGGEGRIITDPCSNCRGQGRVKDKRNVHVQIPAGVDSGMRLKMEGYGDAGQNGAPSGDLYVFIDVEPHPVFERRGDDLILELPIGFVDAALGMKKEIPTLLKEGTCRLTVPEGIQSGTILKVKNQGFPNVHGRGRGDLLVRVSVETPQNLSEEQKELLRKFSSTEKAENFPKKRGFLDKIKGFFSDFTV.

Residues 2-67 (DYYDVLGVSK…QKRESYDRYG (66 aa)) enclose the J domain. The segment at 148 to 226 (GVEKELLVSG…CRGQGRVKDK (79 aa)) adopts a CR-type zinc-finger fold. Positions 161, 164, 178, 181, 200, 203, 214, and 217 each coordinate Zn(2+). 4 CXXCXGXG motif repeats span residues 161-168 (CTTCSGSG), 178-185 (CERCKGSG), 200-207 (CPECGGEG), and 214-221 (CSNCRGQG).

The protein belongs to the DnaJ family. In terms of assembly, homodimer. Requires Zn(2+) as cofactor.

It localises to the cytoplasm. Participates actively in the response to hyperosmotic and heat shock by preventing the aggregation of stress-denatured proteins and by disaggregating proteins, also in an autonomous, DnaK-independent fashion. Unfolded proteins bind initially to DnaJ; upon interaction with the DnaJ-bound protein, DnaK hydrolyzes its bound ATP, resulting in the formation of a stable complex. GrpE releases ADP from DnaK; ATP binding to DnaK triggers the release of the substrate protein, thus completing the reaction cycle. Several rounds of ATP-dependent interactions between DnaJ, DnaK and GrpE are required for fully efficient folding. Also involved, together with DnaK and GrpE, in the DNA replication of plasmids through activation of initiation proteins. The polypeptide is Chaperone protein DnaJ (Chlamydia felis (strain Fe/C-56) (Chlamydophila felis)).